The sequence spans 437 residues: Aminopeptidase G (437 aa).

Catalysis depends on residues cysteine 70, histidine 361, and asparagine 382.

The protein belongs to the peptidase C1 family.

Its subcellular location is the cytoplasm. This is Aminopeptidase G (pepG) from Lactobacillus delbrueckii subsp. lactis.